The following is a 318-amino-acid chain: N-succinylornithine carbamoyltransferase (318 aa).

Residues 47–50 (SLRT), Trp75, and Arg110 each bind carbamoyl phosphate. Glu142 contributes to the N(2)-succinyl-L-ornithine binding site. 147 to 150 (HPLQ) serves as a coordination point for carbamoyl phosphate. The N(2)-succinyl-L-ornithine site is built by His176 and Lys236. 274-275 (CL) is a binding site for carbamoyl phosphate. Arg278 provides a ligand contact to N(2)-succinyl-L-ornithine. A carbamoyl phosphate-binding site is contributed by Arg302.

Belongs to the aspartate/ornithine carbamoyltransferase superfamily. SOTCase family. Homotrimer.

It catalyses the reaction N(2)-succinyl-L-ornithine + carbamoyl phosphate = N(2)-succinyl-L-citrulline + phosphate + H(+). It functions in the pathway amino-acid biosynthesis; L-arginine biosynthesis. Functionally, catalyzes the transfer of the carbamoyl group from carbamoyl phosphate to the delta-amino group of N(2)-succinyl-L-ornithine to produce N(2)-succinyl-L-citrulline. Is essential for arginine biosynthesis. Has no activity with either L-ornithine or L-aspartate as substrate. Also has no detectable AOTCase activity, being unable to convert N(2)-acetyl-L-ornithine to N(2)-acetyl-L-citrulline. The polypeptide is N-succinylornithine carbamoyltransferase (Bacteroides fragilis (strain 638R)).